The sequence spans 548 residues: 5-epi-aristolochene synthase 2 (548 aa).

Mg(2+)-binding residues include D301, D305, D444, T448, and E452. The DDXXD motif motif lies at 301–305 (DDTFD).

This sequence belongs to the terpene synthase family. As to quaternary structure, monomer. It depends on Mg(2+) as a cofactor. In terms of tissue distribution, expressed in roots, but not in shoots.

The protein resides in the cytoplasm. The catalysed reaction is (2E,6E)-farnesyl diphosphate = (+)-5-epi-aristolochene + diphosphate. The protein operates within secondary metabolite biosynthesis; terpenoid biosynthesis. Functionally, catalyzes the cyclization of trans,trans-farnesyl diphosphate (FPP) to the bicyclic intermediate 5-epi-aristolochene, initial step in the conversion of FPP to the sesquiterpenoid antifungal phytoalexin capsidiol. Produces germacrene A as an enzyme-bound intermediate that is not released by the enzyme, but is further cyclized to produce the bicyclic 5-epi-aristolochene. This is 5-epi-aristolochene synthase 2 from Nicotiana attenuata (Coyote tobacco).